Here is a 66-residue protein sequence, read N- to C-terminus: UPF0370 protein YpfN (66 aa).

A helical transmembrane segment spans residues 4–24 (LAKYWWILVLVFLVGVLLNVI). Residues 39–66 (KPELPPHRDFNDKWDDEDDWPKKDQSKK) form a disordered region. The span at 42-51 (LPPHRDFNDK) shows a compositional bias: basic and acidic residues.

The protein belongs to the UPF0370 family.

It is found in the cell membrane. This is UPF0370 protein YpfN from Salmonella arizonae (strain ATCC BAA-731 / CDC346-86 / RSK2980).